A 160-amino-acid polypeptide reads, in one-letter code: Nucleotide-binding protein TERTU_3542 (160 aa).

It belongs to the YajQ family.

Nucleotide-binding protein. The polypeptide is Nucleotide-binding protein TERTU_3542 (Teredinibacter turnerae (strain ATCC 39867 / T7901)).